The chain runs to 298 residues: Tyrosine recombinase XerC (298 aa).

In terms of domain architecture, Core-binding (CB) spans 2–88; it reads TDLHTDVERY…ALRSFFDWLV (87 aa). The 180-residue stretch at 109 to 288 folds into the Tyr recombinase domain; that stretch reads HLPKNIDVDD…DFQHLASVYD (180 aa). Catalysis depends on residues Arg148, Lys172, His240, Arg243, and His266. Tyr275 (O-(3'-phospho-DNA)-tyrosine intermediate) is an active-site residue.

It belongs to the 'phage' integrase family. XerC subfamily. In terms of assembly, forms a cyclic heterotetrameric complex composed of two molecules of XerC and two molecules of XerD, in which XerC interacts with XerD via its C-terminal region, XerD interacts with XerC via its C-terminal region and so on.

Its subcellular location is the cytoplasm. FtsK may regulate the catalytic switch between XerC and XerD in the heterotetrameric complex during the two steps of the recombination process. In terms of biological role, site-specific tyrosine recombinase, which acts by catalyzing the cutting and rejoining of the recombining DNA molecules. Binds cooperatively to specific DNA consensus sequences that are separated from XerD binding sites by a short central region, forming the heterotetrameric XerC-XerD complex that recombines DNA substrates. The complex is essential to convert dimers of the bacterial chromosome into monomers to permit their segregation at cell division. It also contributes to the segregational stability of plasmids. In the complex XerC specifically exchanges the top DNA strands. The polypeptide is Tyrosine recombinase XerC (Escherichia coli O6:K15:H31 (strain 536 / UPEC)).